The chain runs to 470 residues: Nuclear receptor subfamily 0 group B member 1 (470 aa).

A run of 3 repeats spans residues 1-67, 68-133, and 134-200. Residues 1–253 are 4 X 67 AA tandem repeats; it reads MAGEDHQWQG…RPVALKNPQV (253 aa). Short sequence motifs (LXXLL motif) lie at residues 13–17, 80–84, and 146–150; these read LYNML, LYSML, and LYSLL. The stretch at 201 to 253 is one 4; truncated repeat; the sequence is FCGEDQPQQGSTLYSMPTSTNQTPAAPEERPGAPWWDTSCGALRPVALKNPQV. The 265-residue stretch at 205–469 folds into the NR LBD domain; sequence DQPQQGSTLY…DMMLEMLCTK (265 aa). The AF-2 motif signature appears at 461–466; it reads MMLEML.

The protein belongs to the nuclear hormone receptor family. NR0 subfamily. As to quaternary structure, homodimer. Interacts with NR5A1, NR5A2, NR0B2 and with COPS2. Interacts with ESRRB; represses ESRRB activity at the GATA6 promoter.

The protein localises to the nucleus. The protein resides in the cytoplasm. Its function is as follows. Nuclear receptor that lacks a DNA-binding domain and acts as a corepressor that inhibits the transcriptional activity of other nuclear receptors through heterodimeric interactions. Component of a cascade required for the development of the hypothalamic-pituitary-adrenal-gonadal axis. May also have a role in the development of the embryo and in the maintenance of embryonic stem cell pluripotency. The polypeptide is Nuclear receptor subfamily 0 group B member 1 (NR0B1) (Callithrix jacchus (White-tufted-ear marmoset)).